Consider the following 334-residue polypeptide: Terpene synthase 1 (334 aa).

Mg(2+) is bound by residues Asp82 and Asp86. The D(D/E)XX(D/E) motif motif lies at 82–86; sequence DDIFD. Arg184 lines the substrate pocket. Residues Asn230, Ser234, and Glu238 each contribute to the Mg(2+) site. An NSE motif motif is present at residues 230-238; that stretch reads NDIYSYHRE. The short motif at 309-316 is the WxxxxxRY motif element; that stretch reads WSESCTRY.

It belongs to the terpene synthase family. Requires Mg(2+) as cofactor.

The catalysed reaction is (2E,6E)-farnesyl diphosphate = gamma-muurolene + diphosphate. The enzyme catalyses (2E,6E)-farnesyl diphosphate = alpha-muurolene + diphosphate. It catalyses the reaction (2E,6E)-farnesyl diphosphate = (-)-(E)-beta-caryophyllene + diphosphate. It carries out the reaction (2E)-geranyl diphosphate = beta-myrcene + diphosphate. Functionally, terpene synthase that catalyzes the cyclization of farnesyl diphosphate (FPP) into a mixture of sesquiterpenes with gamma-muurolene as the most abundant compound and (-)-beta-caryophyllene, alpha-muurolene, and 4 unidentified sesquiterpenes as minor compoundss. TPS1 also shows monoterpene synthase activity and can also use geranyl diphosphate (GPP) as a substrate to convert it into a mixture of cyclic and acyclic monoterpenes, including myrcene and linalool. P.polycephalum has a unique biology and these volatile terpenoids could function in internal communication of P.polycephalum, to mark the territory that have been explored, or they may be involved in chemotaxis. The sequence is that of Terpene synthase 1 from Physarum polycephalum (Slime mold).